The primary structure comprises 612 residues: MMQVLLVTISLAVFPYQGSSIILESGNVNDYEVVYPQKITALPEEAVQQPEQKYEDTMQYEFEVNGEPVVLHLEKNKDLFSEDYSETRYSPDGRETTTKPPVQDHCYYHGRIQNDAYSSASISACNGLKGHFKLQGETYLIEPLKIPDSEAHAVYKYENIEKEDEAPKMCGVTQTNWESDEPIKKASQLVATSAKRKFHKTFIELVIVVDHRVVKKYDSAATNTKIYEIVNTVNEIFIPLNIRLTLIGVEFWCNRDLINVTSSADDTLDSFGEWRGSDLLNRKRHDNAQLFTDMKFDLSTLGITFLDGMCQAYRSVGIVQEHGNKNFKTAVIMAHELGHNLGMYHDRKNCICNDSSCIMSAVLSSQPSKLFSNCSNHDYRRYLTTYKPKCILNPPLRKDIASPPICGNEIWEEGEECDCGSPKDCQNPCCDAATCKLTPGAECGNGLCCEKCKIKTAGTVCRRARDECDVPEHCTGQSAECPADGFHANGQPCQNNNGYCYNGDCPIMTKQCISLFGSRATVAEDSCFQENQKGSYYGYCRKENGRKIPCAPQDIKCGRLYCLDNSPGNKNPCKMHYRCRDQHKGMVEPGTKCEDGKVCNNKRQCVDVNTAY.

A signal peptide spans 1-20; that stretch reads MMQVLLVTISLAVFPYQGSS. Residues 21–193 constitute a propeptide, or 194; that stretch reads IILESGNVND…KKASQLVATS (173 aa). The Peptidase M12B domain occupies 201 to 395; sequence TFIELVIVVD…YKPKCILNPP (195 aa). Position 204 (Glu-204) interacts with Ca(2+). Residue Asn-259 is glycosylated (N-linked (GlcNAc...) asparagine). Asp-286 is a binding site for Ca(2+). Cystine bridges form between Cys-310/Cys-390, Cys-350/Cys-374, and Cys-352/Cys-357. Residue His-335 coordinates Zn(2+). Residue Glu-336 is part of the active site. Residues His-339 and His-345 each contribute to the Zn(2+) site. 2 N-linked (GlcNAc...) asparagine glycosylation sites follow: Asn-353 and Asn-373. 7 residues coordinate Ca(2+): Cys-390, Asn-393, Ile-405, Asn-408, Glu-412, Glu-415, and Asp-418. The Disintegrin domain maps to 403–489; the sequence is PPICGNEIWE…ECPADGFHAN (87 aa). The cysteines at positions 461 and 481 are disulfide-linked. A D/ECD-tripeptide motif is present at residues 467–469; sequence ECD.

Belongs to the venom metalloproteinase (M12B) family. P-III subfamily. P-IIId sub-subfamily. In terms of assembly, heterotrimer; disulfide-linked. The heterotrimer consists of 1 heavy chain and 2 light chains (lectins): LC1 and LC2 (AC Q7T045 and AC Q696W1). Zn(2+) serves as cofactor. Post-translationally, N-glycosylated. Contains 8.0% of hexoses, 2.5% of hexosamines and 2.5% of sialic acids. As to expression, expressed by the venom gland.

The protein resides in the secreted. The enzyme catalyses Specifically activates several components of the blood clotting system, including coagulation factor X, coagulation factor IX and protein C by cleavage of Arg-|-Xaa bonds. Has no action on insulin B chain.. Its activity is regulated as follows. Calcium is required for the activity of the heterotrimer. In terms of biological role, catalytic subunit of blood coagulation factor X-activating enzyme. Activates coagulation factor X (F10) by cleaving the Arg(234)-Ile(235) bond, activates coagulation factor IX (F9) by cleaving the Arg(226)-Val(227) bond and is also able to activate protein C (PROC). This chain is Coagulation factor X-activating enzyme heavy chain, found in Macrovipera lebetinus (Levantine viper).